The following is a 488-amino-acid chain: Leucine-rich repeat-containing protein 74A (488 aa).

LRR repeat units follow at residues 134-155 (AVTKLELEDNCIMEEGVLSLVE), 162-182 (YLQEMNISNNHLGLEGARIIS), 191-212 (SIWSLELSGNDFKEDSAALLCQ), 219-239 (QIKKLDLSHNQFSDVGGEHLG), 247-268 (GLTSLDLSWNNFHTRGAVALCN), 275-296 (TLTKLDLSMNGFGNEVALALGE), 303-324 (CLVYLDIGGNDIGNEGASKISK), and 331-351 (SLRVLKLFLNPINMDGAILLI).

This Homo sapiens (Human) protein is Leucine-rich repeat-containing protein 74A.